The primary structure comprises 427 residues: MAP kinase-interacting serine/threonine-protein kinase 1 (427 aa).

Basic and acidic residues predominate over residues 1 to 11; that stretch reads MVSSQKLEKPI. The segment at 1 to 37 is disordered; sequence MVSSQKLEKPIEMGSSEPLPIVDSDKRRKKKRKTRAT. Threonine 34 bears the Phosphothreonine; by PAK2 mark. Position 39 is a phosphoserine; by PAK2 (serine 39). In terms of domain architecture, Protein kinase spans 49–333; that stretch reads QLTSELLGEG…AAQVLQHPWV (285 aa). Residues 55–63 and lysine 78 contribute to the ATP site; that span reads LGEGAYAKV. Aspartate 170 acts as the Proton acceptor in catalysis. Phosphoserine is present on residues serine 180 and serine 185. 3 positions are modified to phosphothreonine: threonine 209, threonine 214, and threonine 344. The segment at 407 to 427 is disordered; sequence RALAQAGRSRDANPCLTPAGL.

The protein belongs to the protein kinase superfamily. CAMK Ser/Thr protein kinase family. In terms of assembly, interacts with the C-terminal regions of EIF4G1 and EIF4G2. Also binds to dephosphorylated ERK1 and ERK2, and to the p38 kinases. The cofactor is Mg(2+). Dual phosphorylation of Thr-209 and Thr-214 activates the kinase. Phosphorylation of Thr-344 activates the kinase. MAPK3/ERK1 is one of the kinases which activate MKNK1/MNK1. Phosphorylation by PAK2 leads to a reduced phosphorylation of EIF4G1. As to expression, ubiquitously expressed in all tissues examined, with high levels in skeletal muscle.

The enzyme catalyses L-seryl-[protein] + ATP = O-phospho-L-seryl-[protein] + ADP + H(+). It catalyses the reaction L-threonyl-[protein] + ATP = O-phospho-L-threonyl-[protein] + ADP + H(+). With respect to regulation, phosphorylated and activated by the p38 kinases and kinases in the Erk pathway. May play a role in the response to environmental stress and cytokines. Appears to regulate translation by phosphorylating EIF4E, thus increasing the affinity of this protein for the 7-methylguanosine-containing mRNA cap. The polypeptide is MAP kinase-interacting serine/threonine-protein kinase 1 (Mknk1) (Mus musculus (Mouse)).